The following is a 116-amino-acid chain: NADPH-dependent 7-cyano-7-deazaguanine reductase (116 aa).

The active-site Thioimide intermediate is the Cys-31. The Proton donor role is filled by Asp-38. Substrate contacts are provided by residues 53-55 (IEL) and 72-73 (YE).

It belongs to the GTP cyclohydrolase I family. QueF type 1 subfamily.

The protein localises to the cytoplasm. The catalysed reaction is 7-aminomethyl-7-carbaguanine + 2 NADP(+) = 7-cyano-7-deazaguanine + 2 NADPH + 3 H(+). It functions in the pathway tRNA modification; tRNA-queuosine biosynthesis. Its function is as follows. Catalyzes the NADPH-dependent reduction of 7-cyano-7-deazaguanine (preQ0) to 7-aminomethyl-7-deazaguanine (preQ1). In Chlorobium luteolum (strain DSM 273 / BCRC 81028 / 2530) (Pelodictyon luteolum), this protein is NADPH-dependent 7-cyano-7-deazaguanine reductase.